A 201-amino-acid chain; its full sequence is uncharacterized protein (201 aa).

This is an uncharacterized protein from Caenorhabditis elegans.